The chain runs to 474 residues: uncharacterized protein (474 aa).

An N-terminal signal peptide occupies residues 1–23; the sequence is MLRRYLTLSFSSLLLLALLFLTG. Cys-24 is lipidated: N-palmitoyl cysteine. Cys-24 carries S-diacylglycerol cysteine lipidation.

Belongs to the MG067/MG068/MG395 family.

The protein localises to the cell membrane. This is an uncharacterized protein from Mycoplasma genitalium (strain ATCC 33530 / DSM 19775 / NCTC 10195 / G37) (Mycoplasmoides genitalium).